A 382-amino-acid polypeptide reads, in one-letter code: Mannitol-1-phosphate 5-dehydrogenase (382 aa).

3–14 is an NAD(+) binding site; the sequence is ALHFGAGNIGRG. Lysine 269 carries the post-translational modification N6-acetyllysine.

It belongs to the mannitol dehydrogenase family.

The catalysed reaction is D-mannitol 1-phosphate + NAD(+) = beta-D-fructose 6-phosphate + NADH + H(+). The polypeptide is Mannitol-1-phosphate 5-dehydrogenase (Shigella boydii serotype 18 (strain CDC 3083-94 / BS512)).